The chain runs to 38 residues: Large ribosomal subunit protein bL36 (38 aa).

It belongs to the bacterial ribosomal protein bL36 family.

The sequence is that of Large ribosomal subunit protein bL36 from Streptococcus agalactiae serotype III (strain NEM316).